The following is a 51-amino-acid chain: 2,3,4,5-tetrahydropyridine-2,6-dicarboxylate N-succinyltransferase (51 aa).

It belongs to the transferase hexapeptide repeat family. As to quaternary structure, homotrimer.

It is found in the cytoplasm. It carries out the reaction (S)-2,3,4,5-tetrahydrodipicolinate + succinyl-CoA + H2O = (S)-2-succinylamino-6-oxoheptanedioate + CoA. It participates in amino-acid biosynthesis; L-lysine biosynthesis via DAP pathway; LL-2,6-diaminopimelate from (S)-tetrahydrodipicolinate (succinylase route): step 1/3. This is 2,3,4,5-tetrahydropyridine-2,6-dicarboxylate N-succinyltransferase (dapD) from Klebsiella oxytoca.